A 273-amino-acid polypeptide reads, in one-letter code: Undecaprenyl-diphosphatase (273 aa).

Transmembrane regions (helical) follow at residues 4–24 (LILI…FLPI), 43–63 (KAQV…CWEY), 82–102 (FVLN…LFIK), 108–128 (LFHP…ILWA), 183–203 (AAEF…FYDV), 217–237 (MFVV…RGFI), and 253–273 (IGFG…WSAG).

It belongs to the UppP family.

It localises to the cell inner membrane. The catalysed reaction is di-trans,octa-cis-undecaprenyl diphosphate + H2O = di-trans,octa-cis-undecaprenyl phosphate + phosphate + H(+). Catalyzes the dephosphorylation of undecaprenyl diphosphate (UPP). Confers resistance to bacitracin. This chain is Undecaprenyl-diphosphatase, found in Nitrosomonas eutropha (strain DSM 101675 / C91 / Nm57).